Here is a 141-residue protein sequence, read N- to C-terminus: Hemoglobin subunit alpha (141 aa).

Residues 1–141 enclose the Globin domain; sequence VLSSTDKSNV…VSTVLTSKYR (141 aa). Phosphoserine is present on S3. N6-succinyllysine occurs at positions 7 and 11. K16 carries the N6-acetyllysine; alternate modification. Position 16 is an N6-succinyllysine; alternate (K16). Position 24 is a phosphotyrosine (Y24). S35 carries the post-translational modification Phosphoserine. At K40 the chain carries N6-succinyllysine. H58 serves as a coordination point for O2. Heme b is bound at residue H87. S102 carries the phosphoserine modification. T108 is subject to Phosphothreonine. A phosphoserine mark is found at S124 and S131. Residues T134 and T137 each carry the phosphothreonine modification. A Phosphoserine modification is found at S138.

The protein belongs to the globin family. In terms of assembly, heterotetramer of two alpha chains and two beta chains. In terms of tissue distribution, red blood cells.

Involved in oxygen transport from the lung to the various peripheral tissues. Functionally, hemopressin acts as an antagonist peptide of the cannabinoid receptor CNR1. Hemopressin-binding efficiently blocks cannabinoid receptor CNR1 and subsequent signaling. The protein is Hemoglobin subunit alpha (HBA) of Pteropus alecto (Black flying fox).